We begin with the raw amino-acid sequence, 615 residues long: DNA mismatch repair protein MutL (615 aa).

Positions 378–391 (PAPASGSRPAAPWP) are enriched in low complexity. The interval 378–397 (PAPASGSRPAAPWPNAQPGY) is disordered.

The protein belongs to the DNA mismatch repair MutL/HexB family.

Its function is as follows. This protein is involved in the repair of mismatches in DNA. It is required for dam-dependent methyl-directed DNA mismatch repair. May act as a 'molecular matchmaker', a protein that promotes the formation of a stable complex between two or more DNA-binding proteins in an ATP-dependent manner without itself being part of a final effector complex. In Escherichia coli O127:H6 (strain E2348/69 / EPEC), this protein is DNA mismatch repair protein MutL.